Consider the following 445-residue polypeptide: MAQFFKAKPNRSKQLSSKLSLNVTQLDHLGAGIAHHQGKIVFINGALPGETVQVQLTEQKKKFSRAKLLKVETASGERVSPLCIHYEKCGGCDLQHLNVESQRAHKAKALQELVAKFAQTTASQVCETLSDSPWHYRRRARLATWFDKKTKHISLGFRASSSSDVVEIQSCVVLAKPLSALIPELAFLLNQLSGKKALGHVELTLADNGIFVVLRVTKALSDKDRQRLAEFGASHSLNMLLQDDDANTESLSGHGQQPFYSFNDSDAELKFSAGNFIQVNASVNQAMVNQAVDWLAPQANERVLDLFCGIGNFSLPLAKSGAEVIGVEGVPAMVEQATVNAKGAALDKVSFYHADLSADLSQQPWLGKVDKMLIDPARAGAYESMLSLKKLKPQALVYVSCNPASLARDSEVILKQGYRLTKIAMVDMFPQTHHLESMALFELGK.

The TRAM domain maps to 12–70; that stretch reads SKQLSSKLSLNVTQLDHLGAGIAHHQGKIVFINGALPGETVQVQLTEQKKKFSRAKLLK. C83, C89, C92, and C171 together coordinate [4Fe-4S] cluster. Q278, F307, N312, E328, D355, and D375 together coordinate S-adenosyl-L-methionine. C401 (nucleophile) is an active-site residue.

This sequence belongs to the class I-like SAM-binding methyltransferase superfamily. RNA M5U methyltransferase family. RlmD subfamily.

The enzyme catalyses uridine(1939) in 23S rRNA + S-adenosyl-L-methionine = 5-methyluridine(1939) in 23S rRNA + S-adenosyl-L-homocysteine + H(+). In terms of biological role, catalyzes the formation of 5-methyl-uridine at position 1939 (m5U1939) in 23S rRNA. The chain is 23S rRNA (uracil(1939)-C(5))-methyltransferase RlmD from Shewanella piezotolerans (strain WP3 / JCM 13877).